The sequence spans 365 residues: Deoxyribonuclease-2-alpha (365 aa).

The first 19 residues, 1–19 (MATLSSLLLTALLWVPVGT), serve as a signal peptide directing secretion. Cys-22 and Cys-162 are oxidised to a cystine. N-linked (GlcNAc...) asparagine glycans are attached at residues Asn-215, Asn-269, and Asn-293. Intrachain disulfides connect Cys-270–Cys-348 and Cys-311–Cys-330. His-298 is a catalytic residue.

Belongs to the DNase II family.

The protein localises to the lysosome. The enzyme catalyses Endonucleolytic cleavage to nucleoside 3'-phosphates and 3'-phosphooligonucleotide end-products.. Hydrolyzes DNA under acidic conditions with a preference for double-stranded DNA. Plays a major role in the clearance of nucleic acids generated through apoptosis, hence preventing autoinflammation. Necessary for proper fetal development and for definitive erythropoiesis in fetal liver and bone marrow, where it degrades nuclear DNA expelled from erythroid precursor cells. This Bos taurus (Bovine) protein is Deoxyribonuclease-2-alpha (DNASE2).